Consider the following 642-residue polypeptide: 5-aminolevulinate synthase, non-specific, mitochondrial (642 aa).

The transit peptide at 1-56 (METVVRRCPFLSRVPQAFLQKAGKSLLFYAQNCPKMMEVGAKPAPRTVSTSAAQCQ) directs the protein to the mitochondrion. The disordered stretch occupies residues 51–109 (SAAQCQQVKETPPANEKEKTAKAAVQQAPDESQMAQTPDGTQLPPGHPSPSTSQSSGSK). Polar residues predominate over residues 79–90 (PDESQMAQTPDG). Over residues 99–108 (SPSTSQSSGS) the composition is skewed to low complexity. Residues arginine 219, serine 336, and lysine 355 each contribute to the substrate site. Pyridoxal 5'-phosphate-binding residues include serine 388, histidine 416, and threonine 444. The active site involves lysine 447. Position 447 is an N6-(pyridoxal phosphate)lysine (lysine 447). Pyridoxal 5'-phosphate-binding residues include threonine 476 and threonine 477. Threonine 564 is a binding site for substrate. Proline 578 is subject to Hydroxyproline.

Belongs to the class-II pyridoxal-phosphate-dependent aminotransferase family. Homodimer. Interacts (hydroxylated form) with VHL. The cofactor is pyridoxal 5'-phosphate. In normoxia, is hydroxylated at Pro-578, promoting interaction with VHL, initiating ubiquitination and subsequent degradation via the proteasome. In terms of processing, ubiquitinated; in normoxia following hydroxylation and interaction with VHL, leading to its subsequent degradation via the proteasome. Expressed in the liver, kidney, brain and testis.

It is found in the mitochondrion inner membrane. It catalyses the reaction succinyl-CoA + glycine + H(+) = 5-aminolevulinate + CO2 + CoA. The protein operates within porphyrin-containing compound metabolism; protoporphyrin-IX biosynthesis; 5-aminolevulinate from glycine: step 1/1. In terms of biological role, catalyzes the pyridoxal 5'-phosphate (PLP)-dependent condensation of succinyl-CoA and glycine to form aminolevulinic acid (ALA), with CoA and CO2 as by-products. The sequence is that of 5-aminolevulinate synthase, non-specific, mitochondrial (Alas1) from Rattus norvegicus (Rat).